The primary structure comprises 573 residues: MLRLPTVLRQMRPVSRALAPHLTRAYAKDVKFGADARALMLQGVDLLADAVAVTMGPKGRTVIIEQSWGSPKVTKDGVTVAKSIDLKDKYKNIGAKLVQDVANNTNEEAGDGTTTATVLARSIAKEGFEKISKGANPVEIRRGVMLAVDAVIAELKKQSKPVTTPEEIAQVATISANGDKDIGNIISDAMKKVGRKGVITVKDGKTLNDELEIIEGMKFDRGYISPYFINTSKGQKCEFQDAYVLLSEKKISSVQSIVPALEIANAHRKPLVIIAEDVDGEALSTLVLNRLKVGLQVVAVKAPGFGDNRKNQLKDMAIATGGAVFGEEGLNLNLEDVQAHDLGKVGEVIVTKDDAMLLKGKGDKAHIEKRIQEITEQLDITTSEYEKEKLNERLAKLSDGVAVLKVGGTSDVEVNEKKDRVTDALNATRAAVEEGIVLGGGCALLRCIPALDSLKPANEDQKIGIEIIKRALKIPAMTIAKNAGVEGSLIVEKILQSSSEVGYDAMLGDFVNMVEKGIIDPTKVVRTALLDAAGVASLLTTAEAVVTEIPKEEKDPGMGAMGGMGGGMGGGMF.

Residues Met1–Tyr26 constitute a mitochondrion transit peptide. Lys31 is subject to N6-succinyllysine. Residues Ser67 and Ser70 each carry the phosphoserine modification. Lys75 lines the ATP pocket. Lys75 carries the N6-acetyllysine modification. An N6-acetyllysine; alternate modification is found at Lys82. Lys82 bears the N6-succinyllysine; alternate mark. N6-acetyllysine is present on Lys87. Tyr90 carries the phosphotyrosine modification. Lys91 is modified (N6-acetyllysine). Asp111–Thr115 lines the ATP pocket. The residue at position 125 (Lys125) is an N6-acetyllysine; alternate. The residue at position 125 (Lys125) is an N6-succinyllysine; alternate. An N6-acetyllysine modification is found at Lys130. The residue at position 133 (Lys133) is an N6-acetyllysine; alternate. N6-succinyllysine; alternate is present on Lys133. The residue at position 133 (Lys133) is an N6-malonyllysine; alternate. N6-acetyllysine is present on Lys156. An N6-acetyllysine; alternate mark is found at Lys191, Lys202, Lys205, Lys218, and Lys236. 5 positions are modified to N6-succinyllysine; alternate: Lys191, Lys202, Lys205, Lys218, and Lys236. Lys249 carries the post-translational modification N6-acetyllysine. Residue Lys250 is modified to N6-acetyllysine; alternate. Lys250 bears the N6-succinyllysine; alternate mark. N6-acetyllysine occurs at positions 269 and 292. Lys301 bears the N6-succinyllysine mark. At Lys314 the chain carries N6-acetyllysine. Lys352 carries the N6-acetyllysine; alternate modification. Position 352 is an N6-succinyllysine; alternate (Lys352). Residues Lys359 and Lys389 each carry the N6-acetyllysine modification. Lys396 is modified (N6-acetyllysine; alternate). At Lys396 the chain carries N6-succinyllysine; alternate. Ser410 is modified (phosphoserine). Gly440 is a binding site for ATP. N6-acetyllysine; alternate is present on Lys455. Lys455 is modified (N6-succinyllysine; alternate). An N6-acetyllysine modification is found at Lys469. The residue at position 481 (Lys481) is an N6-acetyllysine; alternate. Lys481 carries the post-translational modification N6-succinyllysine; alternate. Ser488 carries the post-translational modification Phosphoserine. Residue Asp520 coordinates ATP. A Glycyl lysine isopeptide (Lys-Gly) (interchain with G-Cter in SUMO2) cross-link involves residue Lys551.

The protein belongs to the chaperonin (HSP60) family. Homoheptamer arranged in a ring structure. The functional units of these chaperonins consist of heptameric rings of the large subunit Hsp60, which function as a back-to-back double ring. Interacts with 2 heptameric Hsp10 rings to form the symmetrical football complex. Interacts with HRAS. Interacts with ATAD3A. Interacts with ETFBKMT and EEF1AKMT3. Interacts with MFHAS1.

Its subcellular location is the mitochondrion matrix. The catalysed reaction is ATP + H2O + a folded polypeptide = ADP + phosphate + an unfolded polypeptide.. Functionally, chaperonin implicated in mitochondrial protein import and macromolecular assembly. Together with Hsp10, facilitates the correct folding of imported proteins. May also prevent misfolding and promote the refolding and proper assembly of unfolded polypeptides generated under stress conditions in the mitochondrial matrix. The functional units of these chaperonins consist of heptameric rings of the large subunit Hsp60, which function as a back-to-back double ring. In a cyclic reaction, Hsp60 ring complexes bind one unfolded substrate protein per ring, followed by the binding of ATP and association with 2 heptameric rings of the co-chaperonin Hsp10. This leads to sequestration of the substrate protein in the inner cavity of Hsp60 where, for a certain period of time, it can fold undisturbed by other cell components. Synchronous hydrolysis of ATP in all Hsp60 subunits results in the dissociation of the chaperonin rings and the release of ADP and the folded substrate protein. The chain is 60 kDa heat shock protein, mitochondrial (Hspd1) from Rattus norvegicus (Rat).